We begin with the raw amino-acid sequence, 280 residues long: RNA polymerase II holoenzyme cyclin-like subunit (280 aa).

The Cyclin N-terminal domain maps to 23-150 (ERRKGLEDIF…LIEELGTYLV (128 aa)).

Belongs to the cyclin family. Cyclin C subfamily. As to quaternary structure, component of the SRB8-11 complex, a regulatory module of the Mediator complex.

Its subcellular location is the nucleus. Functionally, component of the SRB8-11 complex. The SRB8-11 complex is a regulatory module of the Mediator complex which is itself involved in regulation of basal and activated RNA polymerase II-dependent transcription. The SRB8-11 complex may be involved in the transcriptional repression of a subset of genes regulated by Mediator. It may inhibit the association of the Mediator complex with RNA polymerase II to form the holoenzyme complex. The SRB8-11 complex phosphorylates the C-terminal domain (CTD) of the largest subunit of RNA polymerase II. The protein is RNA polymerase II holoenzyme cyclin-like subunit (SSN8) of Yarrowia lipolytica (strain CLIB 122 / E 150) (Yeast).